The sequence spans 276 residues: Secreted LysM effector LysM10 (276 aa).

An N-terminal signal peptide occupies residues 1–22 (MLLSLVKFGILSVFLLAQEAVA). 3 N-linked (GlcNAc...) asparagine glycosylation sites follow: asparagine 27, asparagine 104, and asparagine 140. A LysM domain is found at 219 to 264 (KTYIAKEDDTCKSISEAQSISTDRLVEVNHLDYSCSSLTSGTALCI). N-linked (GlcNAc...) asparagine glycosylation occurs at asparagine 267.

Belongs to the secreted LysM effector family.

Its subcellular location is the secreted. Secreted LysM effector that might have a role in sequestration of chitin oligosaccharides (breakdown products of fungal cell walls that are released during invasion and act as triggers of host immunity) to dampen host defense. The sequence is that of Secreted LysM effector LysM10 from Penicillium expansum (Blue mold rot fungus).